We begin with the raw amino-acid sequence, 291 residues long: Formamidopyrimidine-DNA glycosylase (291 aa).

Pro2 serves as the catalytic Schiff-base intermediate with DNA. Glu3 (proton donor) is an active-site residue. The active-site Proton donor; for beta-elimination activity is the Lys58. Positions 104, 127, and 172 each coordinate DNA. The FPG-type zinc-finger motif lies at 257–291 (FVYDRAGLPCRACGTPIRQIVQGQRSTFCCPTCQR). Arg281 acts as the Proton donor; for delta-elimination activity in catalysis.

This sequence belongs to the FPG family. In terms of assembly, monomer. Requires Zn(2+) as cofactor.

The catalysed reaction is Hydrolysis of DNA containing ring-opened 7-methylguanine residues, releasing 2,6-diamino-4-hydroxy-5-(N-methyl)formamidopyrimidine.. It catalyses the reaction 2'-deoxyribonucleotide-(2'-deoxyribose 5'-phosphate)-2'-deoxyribonucleotide-DNA = a 3'-end 2'-deoxyribonucleotide-(2,3-dehydro-2,3-deoxyribose 5'-phosphate)-DNA + a 5'-end 5'-phospho-2'-deoxyribonucleoside-DNA + H(+). In terms of biological role, involved in base excision repair of DNA damaged by oxidation or by mutagenic agents. Acts as a DNA glycosylase that recognizes and removes damaged bases. Has a preference for oxidized purines, such as 7,8-dihydro-8-oxoguanine (8-oxoG). Has AP (apurinic/apyrimidinic) lyase activity and introduces nicks in the DNA strand. Cleaves the DNA backbone by beta-delta elimination to generate a single-strand break at the site of the removed base with both 3'- and 5'-phosphates. In Ralstonia pickettii (strain 12J), this protein is Formamidopyrimidine-DNA glycosylase.